We begin with the raw amino-acid sequence, 283 residues long: tRNA-cytidine(32) 2-sulfurtransferase (283 aa).

The PP-loop motif signature appears at 37 to 42 (SGGKDS). [4Fe-4S] cluster is bound by residues Cys-112, Cys-115, and Cys-203.

This sequence belongs to the TtcA family. In terms of assembly, homodimer. Requires Mg(2+) as cofactor. [4Fe-4S] cluster serves as cofactor.

It localises to the cytoplasm. It carries out the reaction cytidine(32) in tRNA + S-sulfanyl-L-cysteinyl-[cysteine desulfurase] + AH2 + ATP = 2-thiocytidine(32) in tRNA + L-cysteinyl-[cysteine desulfurase] + A + AMP + diphosphate + H(+). It participates in tRNA modification. Catalyzes the ATP-dependent 2-thiolation of cytidine in position 32 of tRNA, to form 2-thiocytidine (s(2)C32). The sulfur atoms are provided by the cysteine/cysteine desulfurase (IscS) system. This Legionella pneumophila (strain Paris) protein is tRNA-cytidine(32) 2-sulfurtransferase.